A 420-amino-acid chain; its full sequence is Serine palmitoyltransferase (420 aa).

Residues 1 to 21 (MKHNLQDNLQGEQMANTNSNG) are compositionally biased toward polar residues. Positions 1–25 (MKHNLQDNLQGEQMANTNSNGGKKP) are disordered. Pyridoxal 5'-phosphate-binding positions include 132–133 (GM), His233, Thr261, and Ser263. The residue at position 264 (Lys264) is an N6-(pyridoxal phosphate)lysine.

This sequence belongs to the class-II pyridoxal-phosphate-dependent aminotransferase family. In terms of assembly, homodimer. It depends on pyridoxal 5'-phosphate as a cofactor.

It localises to the cytoplasm. The protein localises to the cell inner membrane. It carries out the reaction L-serine + hexadecanoyl-CoA + H(+) = 3-oxosphinganine + CO2 + CoA. The protein operates within lipid metabolism; sphingolipid metabolism. Significantly inhibited by palmitoyl-CoA concentrations greater than 100 uM. In terms of biological role, catalyzes the condensation of L-serine with palmitoyl-CoA (hexadecanoyl-CoA) to produce 3-oxosphinganine. In Bacteriovorax stolpii (Bdellovibrio stolpii), this protein is Serine palmitoyltransferase.